The primary structure comprises 370 residues: F-box protein At3g20690 (370 aa).

The F-box domain maps to 1-45; it reads MMMSDLPHDLVEEILSRLPLISLKAMRSTCKTWNVLSKHRSFANK.

This is F-box protein At3g20690 from Arabidopsis thaliana (Mouse-ear cress).